The sequence spans 143 residues: Large ribosomal subunit protein uL15 (143 aa).

Belongs to the universal ribosomal protein uL15 family. Part of the 50S ribosomal subunit.

Functionally, binds to the 23S rRNA. This chain is Large ribosomal subunit protein uL15, found in Methanococcus aeolicus (strain ATCC BAA-1280 / DSM 17508 / OCM 812 / Nankai-3).